Consider the following 239-residue polypeptide: Pyridoxine 5'-phosphate synthase (239 aa).

N7 serves as a coordination point for 3-amino-2-oxopropyl phosphate. Position 9–10 (9–10 (DH)) interacts with 1-deoxy-D-xylulose 5-phosphate. Residue R18 participates in 3-amino-2-oxopropyl phosphate binding. H43 functions as the Proton acceptor in the catalytic mechanism. 1-deoxy-D-xylulose 5-phosphate contacts are provided by R45 and H50. E70 serves as the catalytic Proton acceptor. Position 100 (T100) interacts with 1-deoxy-D-xylulose 5-phosphate. The Proton donor role is filled by H191. 3-amino-2-oxopropyl phosphate-binding positions include G192 and 213–214 (GH).

Belongs to the PNP synthase family. Homooctamer; tetramer of dimers.

It localises to the cytoplasm. It carries out the reaction 3-amino-2-oxopropyl phosphate + 1-deoxy-D-xylulose 5-phosphate = pyridoxine 5'-phosphate + phosphate + 2 H2O + H(+). It functions in the pathway cofactor biosynthesis; pyridoxine 5'-phosphate biosynthesis; pyridoxine 5'-phosphate from D-erythrose 4-phosphate: step 5/5. Its function is as follows. Catalyzes the complicated ring closure reaction between the two acyclic compounds 1-deoxy-D-xylulose-5-phosphate (DXP) and 3-amino-2-oxopropyl phosphate (1-amino-acetone-3-phosphate or AAP) to form pyridoxine 5'-phosphate (PNP) and inorganic phosphate. This Trichormus variabilis (strain ATCC 29413 / PCC 7937) (Anabaena variabilis) protein is Pyridoxine 5'-phosphate synthase.